The primary structure comprises 246 residues: ATP synthase subunit a (246 aa).

Positions 1 to 3 (MFY) are cleaved as a propeptide — removed in mature form. The next 7 membrane-spanning stretches (helical) occupy residues 21 to 41 (LTFS…IIIF), 56 to 76 (WGVS…GQIG), 82 to 102 (YFPL…ISMI), 113 to 133 (VAVV…GLYL), 138 to 158 (FFAL…LVLI), 184 to 204 (LMLI…LGFV), and 206 to 226 (GIIP…IAII).

The protein belongs to the ATPase A chain family. F-type ATPases have 2 components, CF(1) - the catalytic core - and CF(0) - the membrane proton channel. CF(1) has five subunits: alpha(3), beta(3), gamma(1), delta(1), epsilon(1). CF(0) has three main subunits: a, b and c.

The protein localises to the mitochondrion inner membrane. In terms of biological role, mitochondrial membrane ATP synthase (F(1)F(0) ATP synthase or Complex V) produces ATP from ADP in the presence of a proton gradient across the membrane which is generated by electron transport complexes of the respiratory chain. F-type ATPases consist of two structural domains, F(1) - containing the extramembraneous catalytic core and F(0) - containing the membrane proton channel, linked together by a central stalk and a peripheral stalk. During catalysis, ATP synthesis in the catalytic domain of F(1) is coupled via a rotary mechanism of the central stalk subunits to proton translocation. Key component of the proton channel; it may play a direct role in the translocation of protons across the membrane. The protein is ATP synthase subunit a (ATP6) of Candida parapsilosis (Yeast).